A 277-amino-acid polypeptide reads, in one-letter code: MATPLSISSNPLTSRHCYRLHLSSTSFKGNVSVLGANPSQILSLKLNQTLKTRNQQQFARPLVVVSQTAATSSAVVAPERFRLDNLGPQPGSRKKQKRKGRGISAGQGASCGFGMRGQKSRSGPGIMRGFEGGQTALYRRLPKLRGIAGGMRSGLPKYLPVNIKDIETAGFQEGDEVSLETLKQKGLINPSGRERKLPLKILGTGELSMKLTFKARAFSTQAKEKLEASGCTLTVLPGRKKWVKPSVAKNQARADEYFAKKRAAAAEAATSEPAASA.

Residues 1–67 constitute a chloroplast transit peptide; it reads MATPLSISSN…FARPLVVVSQ (67 aa). N-acetylthreonine is present on threonine 68. Residues 81–125 are disordered; it reads FRLDNLGPQPGSRKKQKRKGRGISAGQGASCGFGMRGQKSRSGPG. Residues 92 to 101 are compositionally biased toward basic residues; it reads SRKKQKRKGR. Residues 103–115 are compositionally biased toward gly residues; it reads ISAGQGASCGFGM.

The protein belongs to the universal ribosomal protein uL15 family. In terms of assembly, part of the 50S ribosomal subunit.

The protein resides in the plastid. Its subcellular location is the chloroplast. This is Large ribosomal subunit protein uL15c (RPL15) from Arabidopsis thaliana (Mouse-ear cress).